Reading from the N-terminus, the 305-residue chain is Ribosomal RNA large subunit methyltransferase F (305 aa).

Belongs to the methyltransferase superfamily. METTL16/RlmF family.

It is found in the cytoplasm. The catalysed reaction is adenosine(1618) in 23S rRNA + S-adenosyl-L-methionine = N(6)-methyladenosine(1618) in 23S rRNA + S-adenosyl-L-homocysteine + H(+). In terms of biological role, specifically methylates the adenine in position 1618 of 23S rRNA. In Enterobacter sp. (strain 638), this protein is Ribosomal RNA large subunit methyltransferase F.